Consider the following 878-residue polypeptide: Alanine--tRNA ligase (878 aa).

Zn(2+) is bound by residues H566, H570, C668, and H672.

It belongs to the class-II aminoacyl-tRNA synthetase family. It depends on Zn(2+) as a cofactor.

It localises to the cytoplasm. The enzyme catalyses tRNA(Ala) + L-alanine + ATP = L-alanyl-tRNA(Ala) + AMP + diphosphate. Functionally, catalyzes the attachment of alanine to tRNA(Ala) in a two-step reaction: alanine is first activated by ATP to form Ala-AMP and then transferred to the acceptor end of tRNA(Ala). Also edits incorrectly charged Ser-tRNA(Ala) and Gly-tRNA(Ala) via its editing domain. This is Alanine--tRNA ligase from Bacillus velezensis (strain DSM 23117 / BGSC 10A6 / LMG 26770 / FZB42) (Bacillus amyloliquefaciens subsp. plantarum).